We begin with the raw amino-acid sequence, 639 residues long: NADP-dependent malic enzyme, chloroplastic (639 aa).

A chloroplast-targeting transit peptide spans 1 to 49 (MLSARAAATAAAAAASPLWKRGEGGSSGSGSGCTSCREVRRRAAAVRVR). The disordered stretch occupies residues 15–34 (ASPLWKRGEGGSSGSGSGCT). Y187 serves as the catalytic Proton donor. R240 lines the NAD(+) pocket. K258 functions as the Proton acceptor in the catalytic mechanism. The a divalent metal cation site is built by E330, D331, and D354. An NAD(+)-binding site is contributed by D354. Residue 383–399 (LFLGAGEAGTGIAELIA) participates in NADP(+) binding. NAD(+) is bound at residue N495.

Belongs to the malic enzymes family. Homotetramer. Mg(2+) serves as cofactor. It depends on Mn(2+) as a cofactor.

The protein resides in the plastid. Its subcellular location is the chloroplast. It carries out the reaction (S)-malate + NADP(+) = pyruvate + CO2 + NADPH. It catalyses the reaction oxaloacetate + H(+) = pyruvate + CO2. It functions in the pathway photosynthesis; C4 acid pathway. The chloroplastic ME isoform decarboxylates malate shuttled from neighboring mesophyll cells. The CO(2) released is then refixed by ribulose-bisphosphate carboxylase. This pathway eliminates the photorespiratory loss of CO(2) that occurs in most plants. The polypeptide is NADP-dependent malic enzyme, chloroplastic (ME6) (Oryza sativa subsp. japonica (Rice)).